We begin with the raw amino-acid sequence, 1426 residues long: Phospholipid-transporting ATPase VD (1426 aa).

Over 1 to 97 (MTEALQWARY…PRNLFEQFHR (97 aa)) the chain is Cytoplasmic. A helical membrane pass occupies residues 98 to 118 (AANLYFLFLVVLNWVPLVEAF). Residues 119–121 (QKE) lie on the Exoplasmic loop side of the membrane. Residues 122–142 (ITMLPLVVVLTIIAIKDGLED) form a helical membrane-spanning segment. Over 143–321 (YRKYKIDKQI…SKLERRANTD (179 aa)) the chain is Cytoplasmic. A helical membrane pass occupies residues 322–342 (VLWCVMLLVIMCLTGAVGHGI). At 343–365 (WLSRYEKMHFFNVPEPDGHIISP) the chain is on the exoplasmic loop side. The helical transmembrane segment at 366–386 (LLAGFYMFWTMIILLQVLIPI) threads the bilayer. Over 387 to 1113 (SLYVSIEIVK…HWCYTRLSNM (727 aa)) the chain is Cytoplasmic. The active-site 4-aspartylphosphate intermediate is D438. ATP is bound by residues D438, K439, and T440. D438 is a Mg(2+) binding site. Residue T440 coordinates Mg(2+). The disordered stretch occupies residues 506-531 (NGPLGNKPSNHLAGSSFTLGSGEGAS). The span at 512-524 (KPSNHLAGSSFTL) shows a compositional bias: polar residues. Residues E730, F772, K796, R840, T920, G921, D922, 996-1003 (GLIITGKT), R1030, and K1036 each bind ATP. D1056 is a Mg(2+) binding site. ATP contacts are provided by N1059 and D1060. D1060 lines the Mg(2+) pocket. Residues 1114-1134 (ILYFFYKNVAYVNLLFWYQFF) traverse the membrane as a helical segment. At 1135–1145 (CGFSGTSMTDY) the chain is on the exoplasmic loop side. Residues 1146–1166 (WVLIFFNLLFTSAPPVIYGVL) form a helical membrane-spanning segment. The Cytoplasmic segment spans residues 1167 to 1195 (EKDVSAETLMQLPELYRSGQKSEAYLPHT). The helical transmembrane segment at 1196-1216 (FWITLLDAFYQSLVCFFVPYF) threads the bilayer. Topologically, residues 1217–1224 (TYQGSDTD) are exoplasmic loop. The helical transmembrane segment at 1225-1245 (IFAFGNPLNTAALFIVLLHLV) threads the bilayer. At 1246–1252 (IESKSLT) the chain is on the cytoplasmic side. A helical transmembrane segment spans residues 1253–1273 (WIHLLVIIGSILSYFLFAIVF). Residues 1274-1292 (GAMCVTCNPPSNPYWIMQE) lie on the Exoplasmic loop side of the membrane. A helical membrane pass occupies residues 1293–1313 (HMLDPVFYLVCILTTSIALLP). Residues 1314–1426 (RFVYRVLQGS…MAGPSKGKES (113 aa)) are Cytoplasmic-facing. Residue 1364 to 1371 (ANQSAGKS) coordinates ATP.

It belongs to the cation transport ATPase (P-type) (TC 3.A.3) family. Type IV subfamily. Component of a P4-ATPase flippase complex which consists of a catalytic alpha subunit ATP10A and an accessory beta subunit TMEM30A. Requires Mg(2+) as cofactor. Post-translationally, autophosphorylated at the conserved aspartate of the P-type ATPase signature sequence. In terms of tissue distribution, expressed in placenta and, to a lesser extent, in kidney.

It is found in the cell membrane. The protein resides in the endoplasmic reticulum membrane. It carries out the reaction ATP + H2O + phospholipidSide 1 = ADP + phosphate + phospholipidSide 2.. The catalysed reaction is a beta-D-glucosyl-(1&lt;-&gt;1')-N-acylsphing-4-enine(out) + ATP + H2O = a beta-D-glucosyl-(1&lt;-&gt;1')-N-acylsphing-4-enine(in) + ADP + phosphate + H(+). Functionally, catalytic component of a P4-ATPase flippase complex, which catalyzes the hydrolysis of ATP coupled to the transport of glucosylceramide (GlcCer) from the outer to the inner leaflet of the plasma membrane. The sequence is that of Phospholipid-transporting ATPase VD from Homo sapiens (Human).